Consider the following 155-residue polypeptide: Probable Brix domain-containing ribosomal biogenesis protein (155 aa).

The Brix domain occupies 1–155; the sequence is MLITSSRKPS…KNYRKMVMSE (155 aa).

In terms of biological role, probably involved in the biogenesis of the ribosome. The sequence is that of Probable Brix domain-containing ribosomal biogenesis protein from Methanococcoides burtonii (strain DSM 6242 / NBRC 107633 / OCM 468 / ACE-M).